Reading from the N-terminus, the 122-residue chain is S-adenosylmethionine decarboxylase proenzyme (122 aa).

S69 serves as the catalytic Schiff-base intermediate with substrate; via pyruvic acid. S69 bears the Pyruvic acid (Ser); by autocatalysis mark. The active-site Proton acceptor; for processing activity is H74. The active-site Proton donor; for catalytic activity is C89.

The protein belongs to the prokaryotic AdoMetDC family. Type 1 subfamily. In terms of assembly, heterotetramer of two alpha and two beta chains arranged as a dimer of alpha/beta heterodimers. It depends on pyruvate as a cofactor. Post-translationally, is synthesized initially as an inactive proenzyme. Formation of the active enzyme involves a self-maturation process in which the active site pyruvoyl group is generated from an internal serine residue via an autocatalytic post-translational modification. Two non-identical subunits are generated from the proenzyme in this reaction, and the pyruvate is formed at the N-terminus of the alpha chain, which is derived from the carboxyl end of the proenzyme. The post-translation cleavage follows an unusual pathway, termed non-hydrolytic serinolysis, in which the side chain hydroxyl group of the serine supplies its oxygen atom to form the C-terminus of the beta chain, while the remainder of the serine residue undergoes an oxidative deamination to produce ammonia and the pyruvoyl group blocking the N-terminus of the alpha chain.

It carries out the reaction S-adenosyl-L-methionine + H(+) = S-adenosyl 3-(methylsulfanyl)propylamine + CO2. The protein operates within amine and polyamine biosynthesis; S-adenosylmethioninamine biosynthesis; S-adenosylmethioninamine from S-adenosyl-L-methionine: step 1/1. Catalyzes the decarboxylation of S-adenosylmethionine to S-adenosylmethioninamine (dcAdoMet), the propylamine donor required for the synthesis of the polyamines spermine and spermidine from the diamine putrescine. In Sulfurisphaera tokodaii (strain DSM 16993 / JCM 10545 / NBRC 100140 / 7) (Sulfolobus tokodaii), this protein is S-adenosylmethionine decarboxylase proenzyme.